Reading from the N-terminus, the 329-residue chain is NADH-quinone oxidoreductase subunit H (329 aa).

Helical transmembrane passes span 9–29 (LIKI…ATYI), 42–62 (GPCY…IKLF), 75–95 (FIFT…MAPI), 117–137 (IGFL…ILAG), 154–174 (IQLL…LMVV), 188–208 (GGFL…FLIA), 238–258 (LKWG…SFVI), 269–291 (WGFI…LSMW), and 309–329 (WKIM…VILI).

This sequence belongs to the complex I subunit 1 family. As to quaternary structure, NDH-1 is composed of 14 different subunits. Subunits NuoA, H, J, K, L, M, N constitute the membrane sector of the complex.

It is found in the cell inner membrane. The catalysed reaction is a quinone + NADH + 5 H(+)(in) = a quinol + NAD(+) + 4 H(+)(out). Functionally, NDH-1 shuttles electrons from NADH, via FMN and iron-sulfur (Fe-S) centers, to quinones in the respiratory chain. The immediate electron acceptor for the enzyme in this species is believed to be ubiquinone. Couples the redox reaction to proton translocation (for every two electrons transferred, four hydrogen ions are translocated across the cytoplasmic membrane), and thus conserves the redox energy in a proton gradient. This subunit may bind ubiquinone. This chain is NADH-quinone oxidoreductase subunit H, found in Helicobacter pylori (strain J99 / ATCC 700824) (Campylobacter pylori J99).